The chain runs to 116 residues: NADH-ubiquinone oxidoreductase chain 3 (116 aa).

3 helical membrane-spanning segments follow: residues 3-23, 56-76, and 85-105; these read LITT…TVSF, FFLI…LLPL, and PALT…GLIY.

The protein belongs to the complex I subunit 3 family.

It is found in the mitochondrion membrane. It carries out the reaction a ubiquinone + NADH + 5 H(+)(in) = a ubiquinol + NAD(+) + 4 H(+)(out). Core subunit of the mitochondrial membrane respiratory chain NADH dehydrogenase (Complex I) that is believed to belong to the minimal assembly required for catalysis. Complex I functions in the transfer of electrons from NADH to the respiratory chain. The immediate electron acceptor for the enzyme is believed to be ubiquinone. The chain is NADH-ubiquinone oxidoreductase chain 3 (MT-ND3) from Salmo trutta (Brown trout).